The chain runs to 250 residues: Cell division protein ZapD (250 aa).

Belongs to the ZapD family. In terms of assembly, interacts with FtsZ.

The protein localises to the cytoplasm. Cell division factor that enhances FtsZ-ring assembly. Directly interacts with FtsZ and promotes bundling of FtsZ protofilaments, with a reduction in FtsZ GTPase activity. The protein is Cell division protein ZapD of Bordetella petrii (strain ATCC BAA-461 / DSM 12804 / CCUG 43448).